A 337-amino-acid chain; its full sequence is DNA-directed RNA polymerase subunit alpha (337 aa).

The tract at residues 1–233 is alpha N-terminal domain (alpha-NTD); it reads MIQKNWQELI…DQLSIFVNFE (233 aa). An alpha C-terminal domain (alpha-CTD) region spans residues 249-337; that stretch reads FNPVLLKKVD…DLAKRYEDQY (89 aa).

It belongs to the RNA polymerase alpha chain family. Homodimer. The RNAP catalytic core consists of 2 alpha, 1 beta, 1 beta' and 1 omega subunit. When a sigma factor is associated with the core the holoenzyme is formed, which can initiate transcription.

It carries out the reaction RNA(n) + a ribonucleoside 5'-triphosphate = RNA(n+1) + diphosphate. DNA-dependent RNA polymerase catalyzes the transcription of DNA into RNA using the four ribonucleoside triphosphates as substrates. This chain is DNA-directed RNA polymerase subunit alpha, found in Brucella canis (strain ATCC 23365 / NCTC 10854 / RM-666).